A 67-amino-acid chain; its full sequence is LPS-assembly lipoprotein LptM (67 aa).

A signal peptide spans 1–19; the sequence is MKNVFKTLAVLLTLFSLTG. Cysteine 20 carries the N-palmitoyl cysteine lipid modification. Cysteine 20 carries the S-diacylglycerol cysteine lipid modification. The interval 26–67 is disordered; it reads LYFPPADKNAPPPTKKVDSQTQSTMPDKNDRATGDGPSQVNY.

This sequence belongs to the LptM family. Interacts with the outer membrane embedded portion of the LPS translocon formed by LptD and LptE (LptDE).

It is found in the cell outer membrane. Functionally, component of the lipopolysaccharide (LPS) transport (Lpt) pathway that promotes efficient assembly of the outer membrane LPS translocon (LptDE) by the BAM complex. Facilitates oxidative maturation of LptD by stabilizing a conformation of the LPS translocon in which LptD can efficiently acquire native disulfide bonds, thereby activating the LPS translocon. The polypeptide is LPS-assembly lipoprotein LptM (Salmonella typhi).